We begin with the raw amino-acid sequence, 212 residues long: Translation initiation factor IF-3 (212 aa).

This sequence belongs to the IF-3 family. As to quaternary structure, monomer.

The protein resides in the cytoplasm. In terms of biological role, IF-3 binds to the 30S ribosomal subunit and shifts the equilibrium between 70S ribosomes and their 50S and 30S subunits in favor of the free subunits, thus enhancing the availability of 30S subunits on which protein synthesis initiation begins. This is Translation initiation factor IF-3 from Synechococcus sp. (strain CC9311).